The following is a 492-amino-acid chain: Cytochrome P450 26A1 (492 aa).

Cysteine 437 serves as a coordination point for heme.

The protein belongs to the cytochrome P450 family. Requires heme as cofactor.

The protein resides in the endoplasmic reticulum membrane. Its subcellular location is the microsome membrane. The enzyme catalyses all-trans-retinoate + reduced [NADPH--hemoprotein reductase] + O2 = all-trans-(4S)-hydroxyretinoate + oxidized [NADPH--hemoprotein reductase] + H2O + H(+). It catalyses the reaction all-trans-(4S)-hydroxyretinoate + reduced [NADPH--hemoprotein reductase] + O2 = all-trans-(4S,16)-dihydroxyretinoate + oxidized [NADPH--hemoprotein reductase] + H2O + H(+). The catalysed reaction is all-trans-retinoate + reduced [NADPH--hemoprotein reductase] + O2 = all-trans-18-hydroxyretinoate + oxidized [NADPH--hemoprotein reductase] + H2O + H(+). In terms of biological role, a cytochrome P450 monooxygenase involved in the metabolism of retinoates (RAs), the active metabolites of vitamin A, and critical signaling molecules in animals. RAs exist as at least four different isomers: all-trans-RA (atRA), 9-cis-RA, 13-cis-RA, and 9,13-dicis-RA, where atRA is considered to be the biologically active isomer, although 9-cis-RA and 13-cis-RA also have activity. Catalyzes the hydroxylation of atRA primarily at C-4 and C-18, thereby contributing to the regulation of atRA homeostasis and signaling. Hydroxylation of atRA limits its biological activity and initiates a degradative process leading to its eventual elimination. Involved in the convertion of atRA to all-trans-4-oxo-RA. Able to metabolize other RAs such as 9-cis, 13-cis and 9,13-di-cis RA. Can oxidize all-trans-13,14-dihydroretinoate (DRA) to metabolites which could include all-trans-4-oxo-DRA, all-trans-4-hydroxy-DRA, all-trans-5,8-epoxy-DRA, and all-trans-18-hydroxy-DRA. May play a role in the oxidative metabolism of xenobiotics such as tazarotenic acid. This Gallus gallus (Chicken) protein is Cytochrome P450 26A1 (CYP26A1).